The primary structure comprises 433 residues: Pyrimidine-nucleoside phosphorylase (433 aa).

Lysine 81–serine 83 lines the phosphate pocket. Residues glycine 88 and threonine 90 each contribute to the K(+) site. Residues threonine 92, lysine 108–serine 110, and threonine 120 each bind phosphate. Arginine 168 and lysine 187 together coordinate substrate. Residues leucine 243, alanine 246, and glutamate 255 each contribute to the K(+) site.

This sequence belongs to the thymidine/pyrimidine-nucleoside phosphorylase family. In terms of assembly, homodimer. The cofactor is K(+).

It catalyses the reaction uridine + phosphate = alpha-D-ribose 1-phosphate + uracil. The enzyme catalyses thymidine + phosphate = 2-deoxy-alpha-D-ribose 1-phosphate + thymine. It carries out the reaction 2'-deoxyuridine + phosphate = 2-deoxy-alpha-D-ribose 1-phosphate + uracil. In terms of biological role, catalyzes phosphorolysis of the pyrimidine nucleosides uridine, thymidine and 2'-deoxyuridine with the formation of the corresponding pyrimidine base and ribose-1-phosphate. The chain is Pyrimidine-nucleoside phosphorylase (pdp) from Staphylococcus aureus (strain MSSA476).